Reading from the N-terminus, the 191-residue chain is MIAIYPGSFDPITLGHLDIIQRGSRLFDLVIVAVLRNPSKVPLFSVQERLEQIRRTTKHLPNVEADGFDGLTVNYAQQRQAQVLLRGLRAISDFEVELQMAHTNKTLSTQIETVFLATSNEYSFLSSSVVKEIARFGGSVDHLVPPHIALDIYKCYNHNYPTANPTTMEITPPHQNMATVAPQEILQEQET.

Residue Ser-8 participates in substrate binding. ATP-binding positions include 8–9 and His-16; that span reads SF. Residues Lys-40, Thr-72, and Arg-86 each contribute to the substrate site. Residues 87-89, Glu-97, and 122-128 each bind ATP; these read GLR and YSFLSSS.

This sequence belongs to the bacterial CoaD family. In terms of assembly, homohexamer. Mg(2+) is required as a cofactor.

It is found in the cytoplasm. The catalysed reaction is (R)-4'-phosphopantetheine + ATP + H(+) = 3'-dephospho-CoA + diphosphate. Its pathway is cofactor biosynthesis; coenzyme A biosynthesis; CoA from (R)-pantothenate: step 4/5. Reversibly transfers an adenylyl group from ATP to 4'-phosphopantetheine, yielding dephospho-CoA (dPCoA) and pyrophosphate. The protein is Phosphopantetheine adenylyltransferase of Nostoc sp. (strain PCC 7120 / SAG 25.82 / UTEX 2576).